The chain runs to 481 residues: ATP synthase subunit beta, chloroplastic (481 aa).

Position 162–169 (162–169 (GGAGVGKT)) interacts with ATP.

Belongs to the ATPase alpha/beta chains family. F-type ATPases have 2 components, F(1) - the catalytic core - and F(0) - the membrane proton channel. F(1) has five subunits: alpha(3), beta(3), gamma(1), delta(1), epsilon(1). F(0) has four main subunits: a(1), b(1), b'(1) and c(10-14). The alpha and beta chains form an alternating ring which encloses part of the gamma chain. F(1) is attached to F(0) by a central stalk formed by the gamma and epsilon chains, while a peripheral stalk is formed by the delta, b and b' chains.

It is found in the plastid. The protein localises to the chloroplast thylakoid membrane. The enzyme catalyses ATP + H2O + 4 H(+)(in) = ADP + phosphate + 5 H(+)(out). Its function is as follows. F(1)F(0) ATP synthase produces ATP from ADP in the presence of a proton or sodium gradient. F-type ATPases consist of two structural domains, F(1) containing the extramembraneous catalytic core and F(0) containing the membrane proton channel, linked together by a central stalk and a peripheral stalk. During catalysis, ATP synthesis in the catalytic domain of F(1) is coupled via a rotary mechanism of the central stalk subunits to proton translocation. Produces ATP from ADP in the presence of a proton gradient across the membrane. The catalytic sites are hosted primarily by the beta subunits. This chain is ATP synthase subunit beta, chloroplastic, found in Chlamydomonas reinhardtii (Chlamydomonas smithii).